We begin with the raw amino-acid sequence, 218 residues long: Large ribosomal subunit protein uL3 (218 aa).

Positions 124–162 (KRHGFSRGPMTHGSKNHREPGSTGAGTTPGRIYPGKRMA) are disordered.

The protein belongs to the universal ribosomal protein uL3 family. Part of the 50S ribosomal subunit. Forms a cluster with proteins L14 and L19.

One of the primary rRNA binding proteins, it binds directly near the 3'-end of the 23S rRNA, where it nucleates assembly of the 50S subunit. This Synechococcus sp. (strain CC9605) protein is Large ribosomal subunit protein uL3.